The sequence spans 2582 residues: Chromodomain-helicase-DNA-binding protein 8 (2582 aa).

Disordered regions lie at residues aspartate 22–glutamine 111, methionine 136–serine 155, valine 253–glutamate 283, and glutamine 349–leucine 377. Polar residues-rich tracts occupy residues serine 42–glutamine 51, aspartate 94–glutamine 111, and threonine 141–serine 155. A compositionally biased stretch (low complexity) spans glycine 255–proline 267. The segment covering proline 355–alanine 372 has biased composition (pro residues). A Phosphoserine modification is found at serine 434. Disordered stretches follow at residues arginine 475 to lysine 585 and aspartate 598 to proline 617. Residues arginine 495–proline 518 are compositionally biased toward basic and acidic residues. Serine 555 and serine 564 each carry phosphoserine. The segment covering glutamine 574 to lysine 585 has biased composition (basic residues). Lysine 611 participates in a covalent cross-link: Glycyl lysine isopeptide (Lys-Gly) (interchain with G-Cter in SUMO). Chromo domains lie at alanine 644–arginine 711 and valine 726–arginine 792. One can recognise a Helicase ATP-binding domain in the interval leucine 825 to serine 999. Position 838 to 845 (aspartate 838 to threonine 845) interacts with ATP. The DEAH box signature appears at aspartate 950 to histidine 953. Positions leucine 1139–arginine 1290 constitute a Helicase C-terminal domain. A phosphoserine mark is found at serine 1422 and serine 1426. Residues glutamate 1694–leucine 1715 are disordered. Positions isoleucine 1791–glutamate 2304 are interaction with FAM124B. 2 positions are modified to phosphoserine: serine 1978 and serine 1980. The segment at glutamine 1990 to proline 2019 is disordered. The residue at position 1995 (threonine 1995) is a Phosphothreonine. Serine 1997, serine 1999, and serine 2010 each carry phosphoserine. A Glycyl lysine isopeptide (Lys-Gly) (interchain with G-Cter in SUMO2) cross-link involves residue lysine 2027. Serine 2040, serine 2070, and serine 2072 each carry phosphoserine. The segment at valine 2045–glutamate 2120 is disordered. Residues glutamate 2065–leucine 2074 are compositionally biased toward acidic residues. A compositionally biased stretch (low complexity) spans serine 2077 to threonine 2096. Residues glutamate 2104–aspartate 2118 show a composition bias toward basic and acidic residues. Phosphoserine occurs at positions 2184, 2202, and 2204. The tract at residues valine 2187–alanine 2233 is disordered. The residue at position 2206 (threonine 2206) is a Phosphothreonine. Serine 2213 carries the post-translational modification Phosphoserine. Threonine 2217 is subject to Phosphothreonine. Over residues serine 2222–alanine 2233 the composition is skewed to low complexity. The residue at position 2225 (serine 2225) is a Phosphoserine. Lysine 2258 participates in a covalent cross-link: Glycyl lysine isopeptide (Lys-Gly) (interchain with G-Cter in SUMO2). A disordered region spans residues histidine 2486–aspartate 2582. Over residues leucine 2493–glycine 2511 the composition is skewed to basic residues. The span at threonine 2514 to alanine 2529 shows a compositional bias: low complexity. Serine 2520 bears the Phosphoserine mark. Positions proline 2537 to leucine 2551 are enriched in acidic residues.

Belongs to the SNF2/RAD54 helicase family. CHD8 subfamily. Interacts with CTNNB1 and PIAS3. Component of some MLL1/MLL complex, at least composed of the core components KMT2A/MLL1, ASH2L, HCFC1/HCF1, WDR5 and RBBP5, as well as the facultative components BACC1, CHD8, E2F6, HSP70, INO80C, KANSL1, LAS1L, MAX, MCRS1, MGA, KAT8/MOF, PELP1, PHF20, PRP31, RING2, RUVB1/TIP49A, RUVB2/TIP49B, SENP3, TAF1, TAF4, TAF6, TAF7, TAF9 and TEX10. Interacts with CHD7. Interacts with FAM124B. Interacts with p53/TP53 and histone H1. Interacts with CTCF. Interacts with TLK2. Interacts with HNRNPL in an RNA-dependent manner. In terms of processing, sumoylated.

It is found in the nucleus. It catalyses the reaction ATP + H2O = ADP + phosphate + H(+). ATP-dependent chromatin-remodeling factor, it slides nucleosomes along DNA; nucleosome sliding requires ATP. Acts as a transcription repressor by remodeling chromatin structure and recruiting histone H1 to target genes. Suppresses p53/TP53-mediated apoptosis by recruiting histone H1 and preventing p53/TP53 transactivation activity. Acts as a negative regulator of Wnt signaling pathway by regulating beta-catenin (CTNNB1) activity. Negatively regulates CTNNB1-targeted gene expression by being recruited specifically to the promoter regions of several CTNNB1 responsive genes. Involved in both enhancer blocking and epigenetic remodeling at chromatin boundary via its interaction with CTCF. Acts as a suppressor of STAT3 activity by suppressing the LIF-induced STAT3 transcriptional activity. Also acts as a transcription activator via its interaction with ZNF143 by participating in efficient U6 RNA polymerase III transcription. Regulates alternative splicing of a core group of genes involved in neuronal differentiation, cell cycle and DNA repair. Enables H3K36me3-coupled transcription elongation and co-transcriptional RNA processing likely via interaction with HNRNPL. This is Chromodomain-helicase-DNA-binding protein 8 from Mus musculus (Mouse).